Here is a 260-residue protein sequence, read N- to C-terminus: Kallikrein-8 (260 aa).

The N-terminal stretch at M1 to A28 is a signal peptide. Residues Q29–K32 constitute a propeptide that is removed on maturation. The Peptidase S1 domain occupies I33–G257. 6 disulfides stabilise this stretch: C39–C173, C58–C74, C145–C246, C152–C218, C184–C198, and C208–C233. Catalysis depends on H73, which acts as the Charge relay system. Residue N110 is glycosylated (N-linked (GlcNAc...) asparagine). D120 functions as the Charge relay system in the catalytic mechanism. The Charge relay system role is filled by S212.

The protein belongs to the peptidase S1 family. Kallikrein subfamily. Interacts with SPINK9. As to expression, restricted to hippocampus.

It localises to the secreted. The protein resides in the cytoplasm. The enzyme catalyses Cleavage of amide substrates following the basic amino acids Arg or Lys at the P1 position, with a preference for Arg over Lys.. Functionally, serine protease which is capable of degrading a number of proteins such as casein, fibrinogen, kininogen, fibronectin and collagen type IV. Also cleaves L1CAM in response to increased neural activity. Induces neurite outgrowth and fasciculation of cultured hippocampal neurons. Plays a role in the formation and maturation of orphan and small synaptic boutons in the Schaffer-collateral pathway, regulates Schaffer-collateral long-term potentiation in the hippocampus and is required for memory acquisition and synaptic plasticity. Involved in skin desquamation and keratinocyte proliferation. Plays a role in the secondary phase of pathogenesis following spinal cord injury. This chain is Kallikrein-8 (Klk8), found in Rattus norvegicus (Rat).